A 592-amino-acid chain; its full sequence is Aspartate--tRNA(Asp/Asn) ligase (592 aa).

Position 172 (Glu172) interacts with L-aspartate. Positions 196-199 (QLFK) are aspartate. Position 218 (Arg218) interacts with L-aspartate. Residues 218–220 (RDE) and Gln227 contribute to the ATP site. His442 is a binding site for L-aspartate. An ATP-binding site is contributed by Glu476. Arg483 serves as a coordination point for L-aspartate. 528-531 (GWDR) is an ATP binding site. The tract at residues 553–592 (SGTDPLTGAPTPITPEQRKEAGIDADPYAAAGRPPGRQSA) is disordered.

This sequence belongs to the class-II aminoacyl-tRNA synthetase family. Type 1 subfamily. In terms of assembly, homodimer.

The protein resides in the cytoplasm. The enzyme catalyses tRNA(Asx) + L-aspartate + ATP = L-aspartyl-tRNA(Asx) + AMP + diphosphate. Functionally, aspartyl-tRNA synthetase with relaxed tRNA specificity since it is able to aspartylate not only its cognate tRNA(Asp) but also tRNA(Asn). Reaction proceeds in two steps: L-aspartate is first activated by ATP to form Asp-AMP and then transferred to the acceptor end of tRNA(Asp/Asn). The polypeptide is Aspartate--tRNA(Asp/Asn) ligase (Acidothermus cellulolyticus (strain ATCC 43068 / DSM 8971 / 11B)).